Here is a 422-residue protein sequence, read N- to C-terminus: Putidaredoxin reductase CamA (422 aa).

The FAD site is built by A15, D37, K50, V83, and R134. 156-165 (GGGYIGLEVA) is a binding site for NAD(+). FAD is bound by residues D284 and V302.

The protein belongs to the FAD-dependent oxidoreductase family. In terms of assembly, homodimer or monomer. Requires FAD as cofactor.

It carries out the reaction 2 reduced [2Fe-2S]-[putidaredoxin] + NAD(+) + H(+) = 2 oxidized [2Fe-2S]-[putidaredoxin] + NADH. The protein operates within terpene metabolism; (R)-camphor degradation. Functionally, the oxidation of camphor by cytochrome P450-CAM CamC requires the participation of the flavoprotein, putidaredoxin reductase CamA, and the iron-sulfur protein, putidaredoxin CamB, to mediate the transfer of electrons from NADH to P450 for oxygen activation. The protein is Putidaredoxin reductase CamA of Pseudomonas putida (Arthrobacter siderocapsulatus).